The following is a 1081-amino-acid chain: Disheveled-associated activator of morphogenesis 1-A (1081 aa).

Residues 45–418 form the GBD/FH3 domain; that stretch reads LPVPPVEELD…QIVIQNEKGQ (374 aa). Disordered regions lie at residues 455-476 and 519-615; these read KEHN…AKTQ and RTVC…PLKS. A compositionally biased stretch (pro residues) spans 526–536; the sequence is PGGPPPPPGAP. A compositionally biased stretch (low complexity) spans 538 to 547; that stretch reads GPMSMPSGNF. A compositionally biased stretch (pro residues) spans 548–585; it reads MPPPPPPPPPFPGGMAPPPPPPPPPPPPPGGPPPPPGL. Positions 586–600 are enriched in low complexity; sequence PLLGAAPPGAPLGLS. One can recognise an FH2 domain in the interval 603 to 1012; the sequence is KKNIPQPKNP…EERRIRMEAQ (410 aa). An actin-binding region spans residues 696-705; that stretch reads AQNCNILLSR. The span at 1013 to 1029 shows a compositional bias: basic and acidic residues; the sequence is LKEQRERERKARKAKEN. Disordered stretches follow at residues 1013–1038 and 1060–1081; these read LKEQ…EFDD and RKRI…KLNY. The DAD domain occupies 1030 to 1061; sequence GEEEGEFDDLVSALRSGEVFDKDLSKLKRNRK. A compositionally biased stretch (basic and acidic residues) spans 1070-1081; the sequence is SSRERPVTKLNY.

The protein resides in the cytoplasm. Its subcellular location is the cytoskeleton. It localises to the cilium basal body. Its function is as follows. Binds to disheveled (dsh) and Rho, and mediates Wnt-induced dsh-Rho complex formation during gastrulation. May play a role as a scaffolding protein to recruit Rho-GDP and Rho-GEF, thereby enhancing Rho-GTP formation. Can direct nucleation and elongation of new actin filaments. Involved in building functional cilia. Involved in building functional cilia. Involved in the organization of the subapical actin network in multiciliated epithelial cells. The polypeptide is Disheveled-associated activator of morphogenesis 1-A (daam1-a) (Xenopus laevis (African clawed frog)).